Here is a 481-residue protein sequence, read N- to C-terminus: MIRNSEDFSHHLSRESKAREKGPFQMLGRIKSSTGIDAISFSSGLPHPNKFAIRELSIKFPQLGCFKEENGTYAKEVNVTFNIKADPSEGLLNFSQSLQYGQCQGISELVGFIKEHIRRIHAPRYENWDIKMSNGNTSGLEYCLRLLVNYGDHVLTEKYTYPAAITAMRALGVQFVSVDMDSEGMLPESLEEIMRDWDISLGPRPHVLYTVPTGQNPTGSTLSLSRRKKLLALARKYDIIIVEDEPYYFLQMEDYNGSLNPAQQKCDGSTFLKSLVPSLLSLDTEGRVLRLDSFSKLIAPGTRLGYITGNSMFIDHITRIAEVCTESPSGICQSVLYAMLHNWGQEGFCAWLQELQYSYTVRRNAFLNVANKYLPNSVCIYHVPRAGLFLWVELNLNHYRFSDTKKSVSQIEMEIFLALVEKGVKTVCGQFFMANPERSTKIFFRFAYSIADFEDFEEGIKRFTSVINEHFNVESRVRICP.

The protein belongs to the class-I pyridoxal-phosphate-dependent aminotransferase family. The cofactor is pyridoxal 5'-phosphate.

It is found in the cytoplasm. It catalyses the reaction an aromatic L-alpha-amino acid + 2-oxoglutarate = an aromatic oxo-acid + L-glutamate. Has aromatic amino acid transaminase activity. The sequence is that of Aromatic amino acid aminotransferase C1773.13 from Schizosaccharomyces pombe (strain 972 / ATCC 24843) (Fission yeast).